Here is a 283-residue protein sequence, read N- to C-terminus: uncharacterized protein (283 aa).

The segment covering 1–10 has biased composition (polar residues); the sequence is MEVNKTTESL. Disordered regions lie at residues 1-96 and 255-283; these read MEVN…SGGN and DQEG…EAQI. 2 stretches are compositionally biased toward basic and acidic residues: residues 14 to 34 and 44 to 81; these read KVEH…RDVK and SKQE…VSSR.

This sequence belongs to the chlamydial CPn_0705/CT_671/TC_0042 family.

This is an uncharacterized protein from Chlamydia muridarum (strain MoPn / Nigg).